Reading from the N-terminus, the 531-residue chain is Unconventional prefoldin RPB5 interactor (531 aa).

Residue M1 is modified to N-acetylmethionine. Disordered regions lie at residues 1-24, 224-381, 408-470, and 500-531; these read MEPP…APLR, ELES…ELPA, KSRS…SGVS, and TIPE…QQRS. Positions 13-24 are enriched in low complexity; it reads PLAEASAAAPLR. 2 stretches are compositionally biased toward polar residues: residues 257 to 266 and 280 to 296; these read SPVTDSSAAS and GQVN…NSYH. Positions 300-319 are enriched in acidic residues; the sequence is DDDEEEEDDDDDDDEDDDNE. The residue at position 369 (S369) is a Phosphoserine; by RPS6KB1. The segment covering 414–424 has biased composition (polar residues); that stretch reads NSVCSDTSESS. Position 439 is a phosphoserine (S439).

The protein belongs to the RNA polymerase II subunit 5-mediating protein family. In terms of assembly, homodimer. Component of the PAQosome complex which is responsible for the biogenesis of several protein complexes and which consists of R2TP complex members RUVBL1, RUVBL2, RPAP3 and PIH1D1, URI complex members PFDN2, PFDN6, PDRG1, UXT and URI1 as well as ASDURF, POLR2E and DNAAF10/WDR92. Interacts with POLR2E/RPB5, RUVBL2 and RUVBL1. Interacts with PFDN2, PFDN4 and STAP1; the interactions are phosphorylation-dependent and occur in a growth-dependent manner in the mitochondrion. Interacts with UXT. Interacts with PPP1CC; the interaction is phosphorylation-dependent and occurs in a growth factor-dependent manner. Interacts (via the middle C-terminal region) with GTF2F1 and GTF2F2. Interacts with DMAP1. Interacts with TSC1 and TSC2. Interacts with PRPF8 and EFTUD2 in a ZNHIT2-dependent manner. In terms of processing, phosphorylation occurs in response to androgen treatment in prostate cancer cells in a mTOR-dependent manner. Phosphorylated; hyperhosphorylated in mitochondria in a mTORC-dependent signaling pathway. Phosphorylated at Ser-369 by RPS6KB1 in a growth factor- and rapamycin-dependent manner. S6K1-mediated mitochondrial phosphorylation at Ser-369 disrupts the URI1-PPP1CC complex in the mitochondrion, relieves PPP1CC phosphatase inhibition activity and hence engages a negative feedback diminishing RPS6KB1 kinase activity, preventing sustained S6K1-dependent signaling. Phosphorylated. Phosphorylation occurs essentially on serine residues. In terms of tissue distribution, expressed in the spinal cord, ganglia, choroid plexus and olfactors epithelium of the developing brain. Expressed in skin, lung, kidney, testis and muscles (at protein level). Expressed strongly in brain and kidney. Expressed weakly in skeletal muscle, lung and liver.

The protein resides in the nucleus. Its subcellular location is the cytoplasm. It localises to the mitochondrion. The protein localises to the cell projection. It is found in the dendrite. Functionally, involved in gene transcription regulation. Acts as a transcriptional repressor in concert with the corepressor UXT to regulate androgen receptor (AR) transcription. May act as a tumor suppressor to repress AR-mediated gene transcription and to inhibit anchorage-independent growth in prostate cancer cells. Required for cell survival in ovarian cancer cells. Together with UXT, associates with chromatin to the NKX3-1 promoter region. In terms of biological role, plays a central role in maintaining S6K1 signaling and BAD phosphorylation under normal growth conditions thereby protecting cells from potential deleterious effects of sustained S6K1 signaling. The URI1-PPP1CC complex acts as a central component of a negative feedback mechanism that counteracts excessive S6K1 survival signaling to BAD in response to growth factors. Mediates inhibition of PPP1CC phosphatase activity in mitochondria. Coordinates the regulation of nutrient-sensitive gene expression availability in a mTOR-dependent manner. Seems to be a scaffolding protein able to assemble a prefoldin-like complex that contains PFDs and proteins with roles in transcription and ubiquitination. In Mus musculus (Mouse), this protein is Unconventional prefoldin RPB5 interactor (Uri1).